Consider the following 869-residue polypeptide: MAGCRGSLCCCCRWCCCCGERETRTPEELTILGETQEEEDEILPRKDYESLDYDRCINDPYLEVLETMDHKKGRWYEVVKWTVVFAIGVCTGLVGLFVDFFVQLFTQLKFGVVEASVEECSQKGCLALSLLELLGFNLTFVFLASLLVLIEPVAAGSGIPEIKCYLNGVKVPGIVRLRTLLCKVFGVLFSVAGGLFVGKEGPMIHSGAVVGAGLPQFQSISLRKIQFNFPYFRSDRDKRDFVSAGAAAGIAAAFGAPIGATLFSLEEGSSFWNQGLTWKVLFCSMSATFTLNFFRSGIQFGSWGSFQLPGLLNFGEFKCSDSDKKCHLWTAMDMGFFVVMGVIGGLLGATFNCLNKRLAKYRMRNVHPKPKLVRVLESLLVSLVTTLVVFVASMVLGECRQMSSSSQISNGSLKLQVTSDVNSSIKAFFCPNDTYNDMATLFFNPQESAILQLFHQDGTFSPITLALFFVLYFLLACWTYGISVPSGLFVPSLLCGAAFGRLVANVLKSYIGLSHIYSGTFSLIGAAALLGGVVRMTISLTVILIESTNEITYGLPIMITLMVAKWTGDFFNKGIYDIHVGLRGVPLLEWETEVEMDKLRASDIMEPNLTYVYPHTRIQSLVSILRTTVHHAFPVVTENRGNEKEFMKGNQLISNNIKFKKSSILTRAGEQRRRSQSMKSYPSSELRNVCDEHVASEEPAEKEDLLQQMLERRYTPYPNLYPDQSPSEDWTMEERFRPLTFHGLILRSQLVTLLVRGVCYSESQSSASQPRLSYAEMAEDYPRFPDIHDLDLTLLNPRMIVDVTPYMNPSPFTVSPNTHVSQVFNLFRTMGLRHLPVVNAVGEIVGIVTRHNLTYEFLQARLRQHYQTI.

Residues 1–80 (MAGCRGSLCC…KKGRWYEVVK (80 aa)) lie on the Cytoplasmic side of the membrane. Helical transmembrane passes span 81–113 (WTVV…FGVV) and 128–150 (LSLL…LVLI). The Selectivity filter part_1 signature appears at 156-160 (GSGIP). Ser157 contacts chloride. The segment at residues 159–166 (IPEIKCYL) is an intramembrane region (helical). 2 helical membrane passes run 176 to 194 (RLRT…VAGG) and 200 to 217 (EGPM…LPQF). Positions 198–202 (GKEGP) match the Selectivity filter part_2 motif. Intramembrane regions (helical) lie at residues 241 to 253 (FVSA…IAAA) and 257 to 265 (PIGATLFSL). 3 helical membrane-spanning segments follow: residues 277–294 (TWKV…LNFF), 335–364 (GFFV…YRMR), and 371–392 (KLVR…VFVA). N-linked (GlcNAc...) asparagine glycans are attached at residues Asn410, Asn422, and Asn432. Helical transmembrane passes span 462–481 (PITL…WTYG) and 487–511 (GLFV…KSYI). The Selectivity filter part_3 motif lies at 487-491 (GLFVP). Chloride is bound at residue Phe489. Residues 519-533 (GTFSLIGAAALLGGV) constitute an intramembrane region (helical). The segment at residues 534 to 536 (VRM) is an intramembrane region (note=Loop between two helices). An intramembrane region (helical) is located at residues 537–548 (TISLTVILIEST). The segment at residues 549–552 (NEIT) is an intramembrane region (note=Loop between two helices). A helical transmembrane segment spans residues 553-571 (YGLPIMITLMVAKWTGDFF). The Cytoplasmic segment spans residues 572 to 869 (NKGIYDIHVG…ARLRQHYQTI (298 aa)). Tyr576 contacts chloride. The CBS 1 domain maps to 605–662 (MEPNLTYVYPHTRIQSLVSILRTTVHHAFPVVTENRGNEKEFMKGNQLISNNIKFKKS). 630–632 (HHA) contributes to the ATP binding site. Residues 668 to 687 (AGEQRRRSQSMKSYPSSELR) are disordered. Polar residues predominate over residues 677 to 686 (SMKSYPSSEL). Position 773 is a phosphoserine (Ser773). One can recognise a CBS 2 domain in the interval 807–868 (MNPSPFTVSP…QARLRQHYQT (62 aa)). Residue 849–852 (TRHN) coordinates ATP.

It belongs to the chloride channel (TC 2.A.49) family. ClC-6/CLCN6 subfamily. N-glycosylated on several asparagine residues.

It localises to the late endosome membrane. The enzyme catalyses 2 chloride(in) + H(+)(out) = 2 chloride(out) + H(+)(in). Its function is as follows. Voltage-gated channel mediating the exchange of chloride ions against protons. Functions as antiporter and contributes to the acidification of the late endosome lumen. The CLC channel family contains both chloride channels and proton-coupled anion transporters that exchange chloride or another anion for protons. The presence of conserved gating glutamate residues is typical for family members that function as antiporters. In Oryctolagus cuniculus (Rabbit), this protein is H(+)/Cl(-) exchange transporter 6 (CLCN6).